The following is a 683-amino-acid chain: MALSKRELDELKPWIEKTVKRVLGFSEPTVVTAALNCVGKGMDKKKAADHLKPFLDDSTLRFVDKLFEAVEEGRSSRHSKSSSDRSRKRELKEVFGDDSEISKESSGVKKRRIPRFEEVEEEPEVIPGPPSESPGMLTKLQIKQMMEAATRQIEERKKQLSFISPPTPQPKTPSSSQPERLPIGNTIQPSQAATFMNDAIEKARKAAELQARIQAQLALKPGLIGNANMVGLANLHAMGIAPPKVELKDQTKPTPLILDEQGRTVDATGKEIELTHRMPTLKANIRAVKREQFKQQLKEKPSEDMESNTFFDPRVSIAPSQRQRRTFKFHDKGKFEKIAQRLRTKAQLEKLQAEISQAARKTGIHTSTRLALIAPKKELKEGDIPEIEWWDSYIIPNGFDLTEENPKREDYFGITNLVEHPAQLNPPVDNDTPVTLGVYLTKKEQKKLRRQTRREAQKELQEKVRLGLMPPPEPKVRISNLMRVLGTEAVQDPTKVEAHVRAQMAKRQKAHEEANAARKLTAEQRKVKKIKKLKEDISQGVHISVYRVRNLSNPAKKFKIEANAGQLYLTGVVVLHKDVNVVVVEGGPKAQKKFKRLMLHRIKWDEQTSNTKGDDDEESDEEAVKKTNKCVLVWEGTAKDRSFGEMKFKQCPTENMAREHFKKHGAEHYWDLALSESVLESTD.

Residues 1–87 (MALSKRELDE…HSKSSSDRSR (87 aa)) form the PWI domain. The span at 73–107 (GRSSRHSKSSSDRSRKRELKEVFGDDSEISKESSG) shows a compositional bias: basic and acidic residues. Positions 73–135 (GRSSRHSKSS…IPGPPSESPG (63 aa)) are disordered. Residue K139 forms a Glycyl lysine isopeptide (Lys-Gly) (interchain with G-Cter in SUMO2) linkage. The tract at residues 153–183 (IEERKKQLSFISPPTPQPKTPSSSQPERLPI) is disordered. S164 is modified (phosphoserine). Phosphothreonine is present on T167. Glycyl lysine isopeptide (Lys-Gly) (interchain with G-Cter in SUMO2) cross-links involve residues K244 and K252. A mediates interaction with SART3 region spans residues 416–550 (NLVEHPAQLN…VHISVYRVRN (135 aa)). S619 carries the post-translational modification Phosphoserine.

As to quaternary structure, component of the precatalytic spliceosome (spliceosome B complex). Component of the U4/U6-U5 tri-snRNP complex, a building block of the precatalytic spliceosome (spliceosome B complex). The U4/U6-U5 tri-snRNP complex is composed of the U4, U6 and U5 snRNAs and at least PRPF3, PRPF4, PRPF6, PRPF8, PRPF31, SNRNP200, TXNL4A, SNRNP40, SNRPB, SNRPD1, SNRPD2, SNRPD3, SNRPE, SNRPF, SNRPG, DDX23, CD2BP2, PPIH, SNU13, EFTUD2, SART1 and USP39, plus LSM2, LSM3, LSM4, LSM5, LSM6, LSM7 and LSM8. Interacts directly with PRPF4. Part of a heteromeric complex containing PPIH, PRPF3 and PRPF4 that is stable in the absence of RNA. Interacts with SART3; the interaction is direct and recruits the deubiquitinase USP4 to PRPF3. Interacts with PRPF19. Interacts ('Lys-63'-linked polyubiquitinated) with PRPF8 (via the MPN (JAB/Mov34) domain); may stabilize the U4/U6-U5 tri-snRNP complex. Interacts with ERCC6. In terms of processing, ubiquitinated. Undergoes 'Lys-63'-linked polyubiquitination by PRPF19 and deubiquitination by USP4. 'Lys-63'-linked ubiquitination increases the affinity for PRPF8 and may regulate the assembly of the U4/U6-U5 tri-snRNP complex. As to expression, highly expressed in retina, liver, kidney and blood. Detected at lower levels in heart and brain.

Its subcellular location is the nucleus. The protein resides in the nucleus speckle. In terms of biological role, plays a role in pre-mRNA splicing as component of the U4/U6-U5 tri-snRNP complex that is involved in spliceosome assembly, and as component of the precatalytic spliceosome (spliceosome B complex). The polypeptide is U4/U6 small nuclear ribonucleoprotein Prp3 (PRPF3) (Homo sapiens (Human)).